A 241-amino-acid chain; its full sequence is Proteasome subunit beta type-1 (241 aa).

Met1 is subject to N-acetylmethionine. The propeptide occupies 1–28; sequence MLSSVAAYSGAGRDLAMEPHSSVGPLQL. O-linked (GlcNAc) serine glycosylation occurs at Ser58. Residues Ser62 and Ser68 each carry the phosphoserine modification. A Phosphotyrosine modification is found at Tyr150. Position 162 is a phosphoserine (Ser162). N6-acetyllysine is present on Lys204. O-linked (GlcNAc) serine glycosylation is present at Ser209.

It belongs to the peptidase T1B family. As to quaternary structure, the 26S proteasome consists of a 20S proteasome core and two 19S regulatory subunits. The 20S proteasome core is a barrel-shaped complex made of 28 subunits that are arranged in four stacked rings. The two outer rings are each formed by seven alpha subunits, and the two inner rings are formed by seven beta subunits. The proteolytic activity is exerted by three beta-subunits PSMB5, PSMB6 and PSMB7. Interacts with SERPINB2. Interacts with RFPL4A.

The protein localises to the cytoplasm. It localises to the nucleus. Non-catalytic component of the 20S core proteasome complex involved in the proteolytic degradation of most intracellular proteins. This complex plays numerous essential roles within the cell by associating with different regulatory particles. Associated with two 19S regulatory particles, forms the 26S proteasome and thus participates in the ATP-dependent degradation of ubiquitinated proteins. The 26S proteasome plays a key role in the maintenance of protein homeostasis by removing misfolded or damaged proteins that could impair cellular functions, and by removing proteins whose functions are no longer required. Associated with the PA200 or PA28, the 20S proteasome mediates ubiquitin-independent protein degradation. This type of proteolysis is required in several pathways including spermatogenesis (20S-PA200 complex) or generation of a subset of MHC class I-presented antigenic peptides (20S-PA28 complex). The protein is Proteasome subunit beta type-1 (PSMB1) of Bos taurus (Bovine).